Here is a 94-residue protein sequence, read N- to C-terminus: Pyrimidine/purine nucleoside phosphorylase 2 (94 aa).

It belongs to the nucleoside phosphorylase PpnP family.

It catalyses the reaction a purine D-ribonucleoside + phosphate = a purine nucleobase + alpha-D-ribose 1-phosphate. It carries out the reaction adenosine + phosphate = alpha-D-ribose 1-phosphate + adenine. The enzyme catalyses cytidine + phosphate = cytosine + alpha-D-ribose 1-phosphate. The catalysed reaction is guanosine + phosphate = alpha-D-ribose 1-phosphate + guanine. It catalyses the reaction inosine + phosphate = alpha-D-ribose 1-phosphate + hypoxanthine. It carries out the reaction thymidine + phosphate = 2-deoxy-alpha-D-ribose 1-phosphate + thymine. The enzyme catalyses uridine + phosphate = alpha-D-ribose 1-phosphate + uracil. The catalysed reaction is xanthosine + phosphate = alpha-D-ribose 1-phosphate + xanthine. Catalyzes the phosphorolysis of diverse nucleosides, yielding D-ribose 1-phosphate and the respective free bases. Can use uridine, adenosine, guanosine, cytidine, thymidine, inosine and xanthosine as substrates. Also catalyzes the reverse reactions. The chain is Pyrimidine/purine nucleoside phosphorylase 2 from Psychrobacter arcticus (strain DSM 17307 / VKM B-2377 / 273-4).